A 138-amino-acid polypeptide reads, in one-letter code: Secreted RxLR effector protein 51 (138 aa).

An N-terminal signal peptide occupies residues 1-19 (MRSSTILFVLGVAMVAVNG). Residues 38-53 (RLLRSNSGKHKTDEER) carry the RxLR-dEER motif. An N-linked (GlcNAc...) asparagine glycan is attached at Asn-101.

The protein belongs to the RxLR effector family.

The protein localises to the secreted. The protein resides in the host nucleus. In terms of biological role, secreted effector that completely suppresses the host cell death induced by cell death-inducing proteins. The chain is Secreted RxLR effector protein 51 from Plasmopara viticola (Downy mildew of grapevine).